Consider the following 315-residue polypeptide: Lipoyl synthase (315 aa).

[4Fe-4S] cluster is bound by residues C63, C68, C74, C89, C93, C96, and S303. Positions 75–292 (FSHGTATFMI…EKKAYDMGFR (218 aa)) constitute a Radical SAM core domain.

The protein belongs to the radical SAM superfamily. Lipoyl synthase family. [4Fe-4S] cluster serves as cofactor.

It localises to the cytoplasm. The enzyme catalyses [[Fe-S] cluster scaffold protein carrying a second [4Fe-4S](2+) cluster] + N(6)-octanoyl-L-lysyl-[protein] + 2 oxidized [2Fe-2S]-[ferredoxin] + 2 S-adenosyl-L-methionine + 4 H(+) = [[Fe-S] cluster scaffold protein] + N(6)-[(R)-dihydrolipoyl]-L-lysyl-[protein] + 4 Fe(3+) + 2 hydrogen sulfide + 2 5'-deoxyadenosine + 2 L-methionine + 2 reduced [2Fe-2S]-[ferredoxin]. It functions in the pathway protein modification; protein lipoylation via endogenous pathway; protein N(6)-(lipoyl)lysine from octanoyl-[acyl-carrier-protein]: step 2/2. Functionally, catalyzes the radical-mediated insertion of two sulfur atoms into the C-6 and C-8 positions of the octanoyl moiety bound to the lipoyl domains of lipoate-dependent enzymes, thereby converting the octanoylated domains into lipoylated derivatives. The sequence is that of Lipoyl synthase from Laribacter hongkongensis (strain HLHK9).